We begin with the raw amino-acid sequence, 72 residues long: Translation initiation factor IF-1 (72 aa).

In terms of domain architecture, S1-like spans 1-72 (MTKEDCIEMQ…SKGRIIFRSR (72 aa)).

This sequence belongs to the IF-1 family. Component of the 30S ribosomal translation pre-initiation complex which assembles on the 30S ribosome in the order IF-2 and IF-3, IF-1 and N-formylmethionyl-tRNA(fMet); mRNA recruitment can occur at any time during PIC assembly.

Its subcellular location is the cytoplasm. One of the essential components for the initiation of protein synthesis. Stabilizes the binding of IF-2 and IF-3 on the 30S subunit to which N-formylmethionyl-tRNA(fMet) subsequently binds. Helps modulate mRNA selection, yielding the 30S pre-initiation complex (PIC). Upon addition of the 50S ribosomal subunit IF-1, IF-2 and IF-3 are released leaving the mature 70S translation initiation complex. The polypeptide is Translation initiation factor IF-1 (Buchnera aphidicola subsp. Baizongia pistaciae (strain Bp)).